Here is a 294-residue protein sequence, read N- to C-terminus: Acetyl-coenzyme A carboxylase carboxyl transferase subunit beta (294 aa).

The 270-residue stretch at 25–294 (VWTKCTSCEQ…PLVVPVDGSH (270 aa)) folds into the CoA carboxyltransferase N-terminal domain. Positions 29, 32, 48, and 51 each coordinate Zn(2+). The C4-type zinc finger occupies 29-51 (CTSCEQVLYSAELERNLEVCPKC).

It belongs to the AccD/PCCB family. As to quaternary structure, acetyl-CoA carboxylase is a heterohexamer composed of biotin carboxyl carrier protein (AccB), biotin carboxylase (AccC) and two subunits each of ACCase subunit alpha (AccA) and ACCase subunit beta (AccD). It depends on Zn(2+) as a cofactor.

The protein localises to the cytoplasm. It catalyses the reaction N(6)-carboxybiotinyl-L-lysyl-[protein] + acetyl-CoA = N(6)-biotinyl-L-lysyl-[protein] + malonyl-CoA. It participates in lipid metabolism; malonyl-CoA biosynthesis; malonyl-CoA from acetyl-CoA: step 1/1. Component of the acetyl coenzyme A carboxylase (ACC) complex. Biotin carboxylase (BC) catalyzes the carboxylation of biotin on its carrier protein (BCCP) and then the CO(2) group is transferred by the transcarboxylase to acetyl-CoA to form malonyl-CoA. This is Acetyl-coenzyme A carboxylase carboxyl transferase subunit beta from Aliivibrio fischeri (strain MJ11) (Vibrio fischeri).